The primary structure comprises 500 residues: NAD(P)H-quinone oxidoreductase chain 4, chloroplastic (500 aa).

Transmembrane regions (helical) follow at residues 4–24 (FPWL…IFFL), 35–55 (YTMG…CYHF), 87–107 (IGPI…AWPV), 113–130 (LFHF…GLFS), 134–154 (LLLF…LLSM), 167–187 (FILY…GMGL), 208–228 (GLEI…LPII), 242–262 (HYST…YGLI), 274–294 (SIFS…AALT), 305–325 (IAYS…SLTN), 330–350 (GAIL…FLGG), 386–406 (LALP…GIIT), 416–436 (IIIT…LLSM), and 463–483 (FVSI…DLVI).

Belongs to the complex I subunit 4 family.

It localises to the plastid. The protein resides in the chloroplast thylakoid membrane. It carries out the reaction a plastoquinone + NADH + (n+1) H(+)(in) = a plastoquinol + NAD(+) + n H(+)(out). It catalyses the reaction a plastoquinone + NADPH + (n+1) H(+)(in) = a plastoquinol + NADP(+) + n H(+)(out). The chain is NAD(P)H-quinone oxidoreductase chain 4, chloroplastic from Lemna minor (Common duckweed).